A 246-amino-acid chain; its full sequence is 5-oxoprolinase subunit A (246 aa).

This sequence belongs to the LamB/PxpA family. Forms a complex composed of PxpA, PxpB and PxpC.

It catalyses the reaction 5-oxo-L-proline + ATP + 2 H2O = L-glutamate + ADP + phosphate + H(+). In terms of biological role, catalyzes the cleavage of 5-oxoproline to form L-glutamate coupled to the hydrolysis of ATP to ADP and inorganic phosphate. This chain is 5-oxoprolinase subunit A, found in Cupriavidus metallidurans (strain ATCC 43123 / DSM 2839 / NBRC 102507 / CH34) (Ralstonia metallidurans).